Consider the following 285-residue polypeptide: Tropomyosin alpha-3 chain (285 aa).

A coiled-coil region spans residues 1 to 285 (MMEAIKKKMQ…DHALNDMTSI (285 aa)). At M2 the chain carries N-acetylmethionine. Position 2 is an N-acetylalanine (M2). Residues 16–41 (KENALDRAEQAEAEQKQAEERSKQLE) are compositionally biased toward basic and acidic residues. Positions 16 to 44 (KENALDRAEQAEAEQKQAEERSKQLEDEL) are disordered. T54 carries the phosphothreonine modification. S62 and S88 each carry phosphoserine. T109 is subject to Phosphothreonine. N6-acetyllysine occurs at positions 125 and 177. Phosphoserine is present on S207. Y215 is subject to N6-acetyllysine. The residue at position 216 (S216) is a Phosphoserine. T253 carries the post-translational modification Phosphothreonine. Y262 is subject to Phosphotyrosine. The residue at position 272 (S272) is a Phosphoserine. T283 is modified (phosphothreonine). Position 284 is a phosphoserine (S284).

This sequence belongs to the tropomyosin family. In terms of assembly, homodimer. Heterodimer of an alpha (TPM1, TPM3 or TPM4) and a beta (TPM2) chain. Interacts with TMOD1. Interacts with TNNT1.

Its subcellular location is the cytoplasm. The protein resides in the cytoskeleton. In terms of biological role, binds to actin filaments in muscle and non-muscle cells. Plays a central role, in association with the troponin complex, in the calcium dependent regulation of vertebrate striated muscle contraction. Smooth muscle contraction is regulated by interaction with caldesmon. In non-muscle cells is implicated in stabilizing cytoskeleton actin filaments. The sequence is that of Tropomyosin alpha-3 chain (TPM3) from Homo sapiens (Human).